The following is a 274-amino-acid chain: 2,3,4,5-tetrahydropyridine-2,6-dicarboxylate N-succinyltransferase (274 aa).

Residues Arg104 and Asp141 each contribute to the substrate site.

It belongs to the transferase hexapeptide repeat family. Homotrimer.

Its subcellular location is the cytoplasm. The catalysed reaction is (S)-2,3,4,5-tetrahydrodipicolinate + succinyl-CoA + H2O = (S)-2-succinylamino-6-oxoheptanedioate + CoA. It functions in the pathway amino-acid biosynthesis; L-lysine biosynthesis via DAP pathway; LL-2,6-diaminopimelate from (S)-tetrahydrodipicolinate (succinylase route): step 1/3. The protein is 2,3,4,5-tetrahydropyridine-2,6-dicarboxylate N-succinyltransferase of Yersinia pestis.